Here is a 216-residue protein sequence, read N- to C-terminus: Thiopurine S-methyltransferase (216 aa).

Residues Trp10, Leu45, Glu66, and Arg123 each contribute to the S-adenosyl-L-methionine site.

Belongs to the class I-like SAM-binding methyltransferase superfamily. TPMT family.

It localises to the cytoplasm. It carries out the reaction S-adenosyl-L-methionine + a thiopurine = S-adenosyl-L-homocysteine + a thiopurine S-methylether.. The chain is Thiopurine S-methyltransferase from Pseudomonas putida (strain ATCC 700007 / DSM 6899 / JCM 31910 / BCRC 17059 / LMG 24140 / F1).